A 73-amino-acid polypeptide reads, in one-letter code: Large ribosomal subunit protein bL31 (73 aa).

This sequence belongs to the bacterial ribosomal protein bL31 family. Type A subfamily. Part of the 50S ribosomal subunit.

Binds the 23S rRNA. This Paracoccus denitrificans (strain Pd 1222) protein is Large ribosomal subunit protein bL31.